The following is a 143-amino-acid chain: uncharacterized protein (143 aa).

An N-terminal signal peptide occupies residues 1-24 (MKKMLMLAFTFLLALTIHVGEASA).

This is an uncharacterized protein from Bacillus subtilis (strain 168).